The following is a 483-amino-acid chain: BTB/POZ domain and ankyrin repeat-containing protein NBCL (483 aa).

Residues 25 to 109 enclose the BTB domain; it reads SDVTFSVEGR…LYSGQVSIVP (85 aa). Residues 115-129 form a C2HC NPR-type zinc finger; it reads RPNCGERACWHTHCT. Positions 118, 123, 125, and 128 each coordinate Zn(2+). ANK repeat units lie at residues 254 to 283, 284 to 313, 318 to 347, and 351 to 385; these read QKIR…LNLD, EALA…DVNY, SGKT…DPNV, and DGVT…KLRL. Residues 401-437 are disordered; that stretch reads EGNANANSSNNNNAPCSAATPIYPPMNEDHNSSSSNA. Low complexity predominate over residues 403–419; sequence NANANSSNNNNAPCSAA.

It belongs to the plant 'ANKYRIN-BTB/POZ' family. 'NOOT-BOP-COCH-like' (NBCL) subfamily. Homodimer. Interacts with APP1 around the plasma membrane and in the nucleus; this interaction disturbs APP1-mediated regulation of the nuclear transcription factor Y subunit (NF-YA1). As to expression, mainly expressed in root nodules, to a lesser extent in shoot apical meristems (SAM) and root meristems (RM), and barely in leaves, non-nodulating roots and root apical meristems (RAM).

It is found in the nucleus. Its subcellular location is the cytoplasm. The protein localises to the cell membrane. The protein operates within protein modification; protein ubiquitination. Functionally, may act as a substrate-specific adapter of an E3 ubiquitin-protein ligase complex (CUL3-RBX1-BTB) which mediates the ubiquitination and subsequent proteasomal degradation of target proteins. Transcriptional co-regulator involved in the promotion of leaf and floral meristem fate and determinacy. Required for the abscission of senescent organs, probably by regulating the cell wall disorganization in abscission zones (AZs, e.g. pulvini at the base of leaves). Involved in the coordination of the symbiotic nodule developmental program; promotes the formation of root nodules by interacting directly with APP1 to modulate the expression of the nuclear transcription factor Y subunit (NF-YA1), a key nodulin. Necessary for the robust maintenance of nodule identity throughout the nodule developmental program. The protein is BTB/POZ domain and ankyrin repeat-containing protein NBCL of Lotus japonicus (Lotus corniculatus var. japonicus).